Here is a 156-residue protein sequence, read N- to C-terminus: Transcription elongation factor GreA (156 aa).

A coiled-coil region spans residues 44–67 (ENAEYEAAKEKQAMIEGRIQDLCQ).

Belongs to the GreA/GreB family.

In terms of biological role, necessary for efficient RNA polymerase transcription elongation past template-encoded arresting sites. The arresting sites in DNA have the property of trapping a certain fraction of elongating RNA polymerases that pass through, resulting in locked ternary complexes. Cleavage of the nascent transcript by cleavage factors such as GreA or GreB allows the resumption of elongation from the new 3'terminus. GreA releases sequences of 2 to 3 nucleotides. This is Transcription elongation factor GreA from Syntrophobacter fumaroxidans (strain DSM 10017 / MPOB).